We begin with the raw amino-acid sequence, 1480 residues long: Cystic fibrosis transmembrane conductance regulator (1480 aa).

Topologically, residues 1-77 are cytoplasmic; the sequence is MQRSPLEKAS…KLINALRRCF (77 aa). The helical transmembrane segment at 78–98 threads the bilayer; that stretch reads FWRFMFYGIFLYLGEVTKAVQ. The 285-residue stretch at 81–365 folds into the ABC transmembrane type-1 1 domain; that stretch reads FMFYGIFLYL…WAVQTWYDSL (285 aa). The Extracellular segment spans residues 99–122; the sequence is PLLLGRIIASYDPDNKEERSIAIY. A helical membrane pass occupies residues 123–146; that stretch reads LGIGLCLLFIVRTLLLHPAIFGLH. Over 147–195 the chain is Cytoplasmic; it reads HIGMQMRIAMFSLIYKKTLKLSSRVLDKISIGQLVSLLSNNLNKFDEGL. A helical transmembrane segment spans residues 196-216; it reads ALAHFVWIAPLQVALLMGLIW. Residues 217 to 222 lie on the Extracellular side of the membrane; it reads ELLQAS. The helical transmembrane segment at 223–243 threads the bilayer; that stretch reads AFCGLGFLIVLALFQAGLGRM. Residues 244 to 298 lie on the Cytoplasmic side of the membrane; that stretch reads MMKYRDQRAGKISERLVITSEMIENIQSVKAYCWEEAMEKMIENLRQTELKLTRK. Residues 299-319 traverse the membrane as a helical segment; the sequence is AAYVRYFNSSAFFFSGFFVVF. Over 320–339 the chain is Extracellular; the sequence is LSVLPYALIKGIILRKIFTT. A helical transmembrane segment spans residues 340 to 358; that stretch reads ISFCIVLRMAVTRQFPWAV. Residues 359–858 lie on the Cytoplasmic side of the membrane; it reads QTWYDSLGAI…YLRYITVHKS (500 aa). ATP is bound by residues Trp401, Ser434, 458 to 465, and Gln493; that span reads GSTGAGKT. Residues 423-646 form the ABC transporter 1 domain; it reads NGDDSLFFSN…QPDFSSKLMG (224 aa). Cys524 is lipidated: S-palmitoyl cysteine. Ser549 is modified (phosphoserine). The segment at 654–831 is disordered R region; it reads SAERRNSILT…EEINEEDLKE (178 aa). Ser660 and Ser670 each carry phosphoserine; by PKA. At Ser686 the chain carries Phosphoserine; by PKC. Lys688 is covalently cross-linked (Glycyl lysine isopeptide (Lys-Gly) (interchain with G-Cter in ubiquitin)). A phosphoserine; by PKA mark is found at Ser700 and Ser712. At Thr717 the chain carries Phosphothreonine. Phosphoserine; by PKA is present on residues Ser737, Ser753, and Ser768. Ser790 carries the post-translational modification Phosphoserine; by PKC. Residues Ser795 and Ser813 each carry the phosphoserine; by PKA modification. The helical transmembrane segment at 859 to 879 threads the bilayer; that stretch reads LIFVLIWCLVIFLAEVAASLV. Residues 859–1155 form the ABC transmembrane type-1 2 domain; it reads LIFVLIWCLV…AVNSSIDVDS (297 aa). Residues 880–918 are Extracellular-facing; that stretch reads VLWLLGNTPLQDKGNSTHSRNNSYAVIITSTSSYYVFYI. N-linked (GlcNAc...) asparagine glycosylation is found at Asn894 and Asn900. The chain crosses the membrane as a discontinuously helical span at residues 919-939; that stretch reads YVGVADTLLAMGFFRGLPLVH. Over 940 to 990 the chain is Cytoplasmic; the sequence is TLITVSKILHHKMLHSVLQAPMSTLNTLKAGGILNRFSKDIAILDDLLPLT. The chain crosses the membrane as a helical span at residues 991–1011; the sequence is IFDFIQLLLIVIGAIAVVAVL. The Extracellular portion of the chain corresponds to 1012-1013; the sequence is QP. A helical membrane pass occupies residues 1014–1034; it reads YIFVATVPVIVAFIMLRAYFL. The Cytoplasmic segment spans residues 1035–1095; the sequence is QTSQQLKQLE…TANWFLYLST (61 aa). The chain crosses the membrane as a helical span at residues 1096–1116; the sequence is LRWFQMRIEMIFVIFFIAVTF. Topologically, residues 1117–1130 are extracellular; it reads ISILTTGEGEGRVG. A helical transmembrane segment spans residues 1131-1151; the sequence is IILTLAMNIMSTLQWAVNSSI. The Cytoplasmic portion of the chain corresponds to 1152-1480; that stretch reads DVDSLMRSVS…TEEEVQDTRL (329 aa). The region spanning 1210 to 1443 is the ABC transporter 2 domain; sequence MTVKDLTAKY…RSLFRQAISP (234 aa). Residues Tyr1219 and 1244–1251 contribute to the ATP site; that span reads GRTGSGKS. An interaction with GORASP2 region spans residues 1386–1480; that stretch reads RTLKQAFADC…TEEEVQDTRL (95 aa). Residue Cys1395 is the site of S-palmitoyl cysteine attachment. 2 positions are modified to phosphoserine: Ser1444 and Ser1456. A disordered region spans residues 1452–1480; sequence HRNSSKCKSKPQIAALKEETEEEVQDTRL. The span at 1470 to 1480 shows a compositional bias: acidic residues; that stretch reads ETEEEVQDTRL. Positions 1478 to 1480 match the PDZ-binding motif; the sequence is TRL.

It belongs to the ABC transporter superfamily. ABCC family. CFTR transporter (TC 3.A.1.202) subfamily. In terms of assembly, monomer; does not require oligomerization for channel activity. May form oligomers in the membrane. Interacts with SLC26A3, SLC26A6 and SHANK2. Interacts with NHERF1 and MYO6. Interacts (via C-terminus) with GOPC (via PDZ domain); this promotes CFTR internalization and thereby decreases channel activity. Interacts with SLC4A7 through NHERF1. Found in a complex with MYO5B and RAB11A. Interacts with ANO1. Interacts with SLC26A8. Interacts with AHCYL1; the interaction increases CFTR activity. Interacts with CSE1L. The core-glycosylated form interacts with GORASP2 (via PDZ GRASP-type 1 domain) in respone to ER stress. Interacts with MARCHF2; the interaction leads to CFTR ubiqtuitination and degradation. Interacts with ADGRG2. In terms of processing, N-glycosylated. Phosphorylated; cAMP treatment promotes phosphorylation and activates the channel. Dephosphorylation decreases the ATPase activity (in vitro). Phosphorylation at PKA sites activates the channel. Phosphorylation at PKC sites enhances the response to phosphorylation by PKA. Phosphorylated by AMPK; this inhibits channel activity. Post-translationally, ubiquitinated, leading to its degradation in the lysosome. Deubiquitination by USP10 in early endosomes enhances its endocytic recycling to the cell membrane. Ubiquitinated by RNF185 during ER stress. Ubiquitinated by MARCHF2. As to expression, expressed in the respiratory airway, including bronchial epithelium, and in the female reproductive tract, including oviduct (at protein level). Detected in pancreatic intercalated ducts in the exocrine tissue, on epithelial cells in intralobular striated ducts in sublingual salivary glands, on apical membranes of crypt cells throughout the small and large intestine, and on the reabsorptive duct in eccrine sweat glands. Detected on the equatorial segment of the sperm head (at protein level). Detected in nasal and bronchial superficial epithelium. Expressed by the central cells on the sebaceous glands, dermal adipocytes and, at lower levels, by epithelial cells.

It localises to the apical cell membrane. The protein localises to the early endosome membrane. The protein resides in the cell membrane. Its subcellular location is the recycling endosome membrane. It is found in the endoplasmic reticulum membrane. It localises to the nucleus. The enzyme catalyses ATP + H2O + closed Cl(-) channel = ADP + phosphate + open Cl(-) channel.. It carries out the reaction chloride(in) = chloride(out). It catalyses the reaction hydrogencarbonate(in) = hydrogencarbonate(out). The catalysed reaction is ATP + H2O = ADP + phosphate + H(+). In terms of biological role, epithelial ion channel that plays an important role in the regulation of epithelial ion and water transport and fluid homeostasis. Mediates the transport of chloride ions across the cell membrane. Possesses an intrinsic ATPase activity and utilizes ATP to gate its channel; the passive flow of anions through the channel is gated by cycles of ATP binding and hydrolysis by the ATP-binding domains. The ion channel is also permeable to HCO(3)(-); selectivity depends on the extracellular chloride concentration. In vitro, mediates ATP-dependent glutathione flux. Exerts its function also by modulating the activity of other ion channels and transporters. Plays an important role in airway fluid homeostasis. Contributes to the regulation of the pH and the ion content of the airway surface fluid layer and thereby plays an important role in defense against pathogens. Modulates the activity of the epithelial sodium channel (ENaC) complex, in part by regulating the cell surface expression of the ENaC complex. Inhibits the activity of the ENaC channel containing subunits SCNN1A, SCNN1B and SCNN1G. Inhibits the activity of the ENaC channel containing subunits SCNN1D, SCNN1B and SCNN1G, but not of the ENaC channel containing subunits SCNN1A, SCNN1B and SCNN1G. May regulate bicarbonate secretion and salvage in epithelial cells by regulating the transporter SLC4A7. Can inhibit the chloride channel activity of ANO1. Plays a role in the chloride and bicarbonate homeostasis during sperm epididymal maturation and capacitation. The sequence is that of Cystic fibrosis transmembrane conductance regulator from Homo sapiens (Human).